We begin with the raw amino-acid sequence, 326 residues long: MDQDYRARLVYPFSGAISPHADIVDQATLAWAAMFGLLTDSLRHKSRRLQYGLLAARAYPRADREMLQIAADWIAWLFFMDDQCDETGIGRDLQRMIALHERFLAILDGATPEAHDCALTYALADLRRRLALRAPDNWLRRFSEHVRLYFTANRWETVNRQRGATPNVATYCAARLFSGAVYACFDLIELAEQIELPFYARHHSIVQQLEQAANNIICWCNDVLSYPKEMQHGDRHNLVLVIQGEHQCSLPEAIDRALDLHAREVATFVRKRTCVPYFDAAVNTALEKYVTGLQFWICANRDWSLTATRYAPTHKSQEMVMAVAQQ.

Mg(2+)-binding residues include Asp-81 and Asp-85. The short motif at Asp-81 to Asp-85 is the DDXXD motif element. Arg-175 contacts substrate. Residues Asn-221 and Ser-225 each coordinate Mg(2+). Lys-228 provides a ligand contact to substrate. Glu-229 serves as a coordination point for Mg(2+). Arg-309–Tyr-310 contributes to the substrate binding site.

This sequence belongs to the terpene synthase family. The cofactor is Mg(2+).

It carries out the reaction (2E,6E)-farnesyl diphosphate + H2O = (+)-T-muurolol + diphosphate. Its pathway is secondary metabolite biosynthesis; terpenoid biosynthesis. Functionally, catalyzes the conversion of (2E,6E)-farnesyl diphosphate (FPP) into (+)-T-muurolol via a 1,10-cyclization, which requires isomerization of FPP to nerolidyl diphosphate (NPP) and then abstraction of the pyrophosphate from intermediate NPP leading to a (E,Z)-germacradienyl (helminthogermacradienyl) cation. In Roseiflexus castenholzii (strain DSM 13941 / HLO8), this protein is (+)-T-muurolol synthase ((2E,6E)-farnesyl diphosphate cyclizing).